The primary structure comprises 269 residues: Expansin-B11 (269 aa).

The signal sequence occupies residues 1 to 30; sequence MTVVSIMWSLVQVQVLVAVALAFLVGGAWC. Residue Asn-40 is glycosylated (N-linked (GlcNAc...) asparagine). One can recognise an Expansin-like EG45 domain in the interval 69–175; the sequence is GGGCGYKDVN…RRVKCKYGSK (107 aa). Intrachain disulfides connect Cys-72-Cys-100, Cys-103-Cys-170, and Cys-108-Cys-114. The Expansin-like CBD domain occupies 187–268; sequence NYLALLVKYV…GWKPNTAYTA (82 aa).

It belongs to the expansin family. Expansin B subfamily. In terms of tissue distribution, expressed in pollen.

The protein localises to the secreted. It is found in the cell wall. It localises to the membrane. Functionally, may aid fertilization by loosening the cell wall of the stigma and style, thereby facilitating penetration of the pollen tube. Acts selectively on grass cell walls, which are relatively poor in pectins and xyloglucans and rich in glucuronoarabinoxylans and (1-3),(1-4)-beta-D-glucans, when compared with cell walls of other angiosperms, including other monocots. This is Expansin-B11 (EXPB11) from Zea mays (Maize).